The following is a 249-amino-acid chain: NADH dehydrogenase [ubiquinone] flavoprotein 2, mitochondrial (249 aa).

The transit peptide at 1–32 directs the protein to the mitochondrion; that stretch reads MFFSAALRARAAGLTAHWGRHVRNLHKTAKQN. At K61 the chain carries N6-acetyllysine. Residues C135, C140, C176, and C180 each contribute to the [2Fe-2S] cluster site. At Y193 the chain carries Phosphotyrosine; by SRC. The segment at 213–249 is disordered; it reads IPKPGPRSGRFSCEPAGGLTSLTEPPKGPGFGVQAGL.

This sequence belongs to the complex I 24 kDa subunit family. In terms of assembly, core subunit of respiratory chain NADH dehydrogenase (Complex I) which is composed of 45 different subunits. This is a component of the flavoprotein-sulfur (FP) fragment of the enzyme. The cofactor is [2Fe-2S] cluster.

The protein localises to the mitochondrion inner membrane. The enzyme catalyses a ubiquinone + NADH + 5 H(+)(in) = a ubiquinol + NAD(+) + 4 H(+)(out). In terms of biological role, core subunit of the mitochondrial membrane respiratory chain NADH dehydrogenase (Complex I) which catalyzes electron transfer from NADH through the respiratory chain, using ubiquinone as an electron acceptor. Parts of the peripheral arm of the enzyme, where the electrons from NADH are accepted by flavin mononucleotide (FMN) and then passed along a chain of iron-sulfur clusters by electron tunnelling to the final acceptor ubiquinone. Contains one iron-sulfur cluster. The chain is NADH dehydrogenase [ubiquinone] flavoprotein 2, mitochondrial from Pan troglodytes (Chimpanzee).